A 259-amino-acid polypeptide reads, in one-letter code: DNA-directed RNA polymerase 30 kDa polypeptide (259 aa).

The segment at 155-195 adopts a TFIIS-type zinc-finger fold; sequence YNTPCPNCKSRNTTPMMIQTRAADEPPLVRHACRDCKQHFK. The Zn(2+) site is built by C159, C162, C187, and C190. Positions 220–259 are disordered; the sequence is EILPDNNPSPPESPEPASPIDDGLIRATFDRNDEPPEDDE. Residues 226 to 236 show a composition bias toward pro residues; sequence NPSPPESPEPA.

Belongs to the poxviridae DNA-directed RNA polymerase 30 kDa subunit family. As to quaternary structure, the DNA-dependent RNA polymerase (vRNAP) consists of eight subunits encoded by early viral genes and termed according to their apparent molecular masses Rpo147, Rpo132, Rpo35, Rpo30, Rpo22, Rpo19, Rpo18, and Rpo7. The same holoenzyme, with the addition of the transcription-specificity factor RAP94, is used for early gene expression.

The protein localises to the virion. The protein resides in the host cytoplasm. The catalysed reaction is RNA(n) + a ribonucleoside 5'-triphosphate = RNA(n+1) + diphosphate. In terms of biological role, part of the DNA-dependent RNA polymerase which catalyzes the transcription of viral DNA into RNA using the four ribonucleoside triphosphates as substrates. Responsible for the transcription of early, intermediate and late genes. DNA-dependent RNA polymerase associates with the early transcription factor (ETF), itself composed of OPG118 and OPG134, thereby allowing the early genes transcription. Late transcription, and probably also intermediate transcription, require newly synthesized RNA polymerase. In Homo sapiens (Human), this protein is DNA-directed RNA polymerase 30 kDa polypeptide (OPG066).